A 1003-amino-acid polypeptide reads, in one-letter code: Glutamate receptor ionotropic, NMDA 3B (1003 aa).

The signal sequence occupies residues 1–24 (MECVQTLWLSLALALARGSWVVRG). The Extracellular segment spans residues 25–574 (HPQPCGVPTR…PIGAFMWPLH (550 aa)). 5 N-linked (GlcNAc...) asparagine glycosylation sites follow: N69, N212, N344, N451, and N465. 2 disulfide bridges follow: C439-C475 and C445-C476. Glycine-binding residues include S531, S533, and R538. Residues S533 and R538 each contribute to the D-serine site. A helical membrane pass occupies residues 575-594 (WSMWVGVFAALHLTALFLTL). The Cytoplasmic segment spans residues 595 to 615 (YEWRSPYGLTPRGRNRGTVFS). Residues 616-627 (YSSALNLCYAIL) constitute an intramembrane region (discontinuously helical). Topologically, residues 628–641 (FGRTVSSKTPKCPT) are cytoplasmic. Residues 642-661 (GRFLMNLWAIFCLLVLSSYT) form a helical membrane-spanning segment. At 662-832 (ANLAAVMVGD…TLQMGVYHLS (171 aa)) the chain is on the extracellular side. S701 contributes to the glycine binding site. Residues S701, A702, and D745 each coordinate D-serine. D745 lines the glycine pocket. N786 is a glycosylation site (N-linked (GlcNAc...) asparagine). A helical membrane pass occupies residues 833–848 (GLFVLLCLGLGSALLT). The Cytoplasmic portion of the chain corresponds to 849–1003 (SLGEHVFYRL…RLLHAAPAES (155 aa)). The interval 883–912 (LNTGPPEGQQERAEQECSGPKEEQPAADGA) is disordered. The span at 891–906 (QQERAEQECSGPKEEQ) shows a compositional bias: basic and acidic residues. Residues 947-986 (SNGPGVQAELRELELRIEAARERLRSALLRRGELRAQLGD) are a coiled coil. Residues 952–985 (VQAELRELELRIEAARERLRSALLRRGELRAQLG) form an involved in the trafficking and surface expression of NMDARs region.

Belongs to the glutamate-gated ion channel (TC 1.A.10.1) family. NR3B/GRIN3B subfamily. In terms of assembly, forms heterotetrameric channels that contain at least two GluN1 subunits and at least a combination of one GluN2 and one GluN3 subunits (in vitro). Forms heterotetrameric channels composed of two GluN1/zeta subunits (GRIN1), and two identical GluN3 subunits (GRIN3A or GRIN3B) (in vitro). Does not form functional homomeric channels. Expressed in the facial nucleus and the ambiguus nucleus of the brainstem, pons, medulla, spinal cord and cerebellum.

It is found in the cell membrane. Its subcellular location is the postsynaptic cell membrane. The catalysed reaction is Ca(2+)(in) = Ca(2+)(out). The enzyme catalyses Na(+)(in) = Na(+)(out). Its function is as follows. Component of a non-conventional N-methyl-D-aspartate (NMDA) receptors (NMDARs) that function as heterotetrameric, ligand-gated cation channels with low calcium permeability and low voltage-dependent block by Mg(2+). Forms glutamatergic receptor complexes with GluN1 and GluN2 subunits which are activated by glycine binding to the GluN1 and GluN3 subunits and L-glutamate binding to GluN2 subunits. Forms excitatory glycinergic receptor complexes with GluN1 alone which are activated by glycine binding to the GluN1 and GluN3 subunits. GluN3B subunit also binds D-serine and, in the absence of glycine, activates glycinergic receptor complexes, but with lower efficacy than glycine. Each GluN3 subunit confers differential attributes to channel properties, including activation, deactivation and desensitization kinetics, pH sensitivity, Ca2(+) permeability, and binding to allosteric modulators. The protein is Glutamate receptor ionotropic, NMDA 3B of Mus musculus (Mouse).